Reading from the N-terminus, the 1098-residue chain is Probable arabinosyltransferase B (1098 aa).

12 consecutive transmembrane segments (helical) span residues 28 to 50, 217 to 239, 271 to 293, 402 to 419, 434 to 456, 472 to 494, 541 to 558, 570 to 587, 597 to 619, 626 to 648, 663 to 685, and 698 to 720; these read WVAT…LPVV, LKLL…LWRL, ASWR…WHVI, LRPE…YVLI, AVVT…AALV, LVGT…TVVF, FGFL…FIML, PAWR…FLMF, GLFA…PSVL, MAFL…GWWY, IDGI…YAAW, and LIRA…VFVA.

This sequence belongs to the emb family.

It localises to the cell membrane. Its function is as follows. Arabinosyl transferase responsible for the polymerization of arabinose into the arabinan of arabinogalactan. This Mycobacterium bovis (strain ATCC BAA-935 / AF2122/97) protein is Probable arabinosyltransferase B (embB).